Reading from the N-terminus, the 140-residue chain is Chorion class A protein Ld2/Ld41 (140 aa).

Residues Met1 to Ser21 form the signal peptide.

It belongs to the chorion protein family.

In terms of biological role, this protein is one of many from the eggshell of the gypsy moth. This is Chorion class A protein Ld2/Ld41 from Lymantria dispar (Gypsy moth).